Reading from the N-terminus, the 106-residue chain is Thiosulfate sulfurtransferase GlpE (106 aa).

In terms of domain architecture, Rhodanese spans 17 to 105 (EQSEAKLVDI…WQRAELPIVR (89 aa)). The active-site Cysteine persulfide intermediate is the Cys65.

This sequence belongs to the GlpE family.

It localises to the cytoplasm. It catalyses the reaction thiosulfate + hydrogen cyanide = thiocyanate + sulfite + 2 H(+). The enzyme catalyses thiosulfate + [thioredoxin]-dithiol = [thioredoxin]-disulfide + hydrogen sulfide + sulfite + 2 H(+). In terms of biological role, transferase that catalyzes the transfer of sulfur from thiosulfate to thiophilic acceptors such as cyanide or dithiols. May function in a CysM-independent thiosulfate assimilation pathway by catalyzing the conversion of thiosulfate to sulfite, which can then be used for L-cysteine biosynthesis. The polypeptide is Thiosulfate sulfurtransferase GlpE (Vibrio campbellii (strain ATCC BAA-1116)).